The primary structure comprises 662 residues: Probable conjugal transfer protein TrbE part 2 (662 aa).

307–314 is an ATP binding site; sequence GPTGSGKS.

The protein belongs to the TrbE/VirB4 family.

The chain is Probable conjugal transfer protein TrbE part 2 (trbEB) from Sinorhizobium fredii (strain NBRC 101917 / NGR234).